We begin with the raw amino-acid sequence, 240 residues long: Seed lectin (240 aa).

Asn-111 carries an N-linked (GlcNAc...) asparagine glycan. Positions 123 and 125 each coordinate Mn(2+). Asp-125, Asn-129, and Asp-132 together coordinate Ca(2+). 2 residues coordinate Mn(2+): Asp-132 and His-137. An N-linked (GlcNAc...) asparagine glycan is attached at Asn-183.

This sequence belongs to the leguminous lectin family. In terms of assembly, homotetramer. In terms of processing, partially N-glycosylated at Asn-111 and Asn-183 with the heptasaccharide [(beta-xylosyl-1,2)(alpha-mannosyl-1,6)(alpha-mannosyl-1,3)]beta-manosyl-1,4-GlcNAC-beta-1,4-GlcNAc-beta-1,4 [alpha-fucosyl-1,3]GlcNAc. A small proportion of alpha chains are proteolytically cleaved at 114-115 into gamma and beta chains. This is probably dependent on the deglycosylation of Asn-111. Seed.

Its function is as follows. Lectin that binds galactose. The sequence is that of Seed lectin from Vatairea macrocarpa.